The primary structure comprises 526 residues: Arp2/3 complex-activating protein rickA (526 aa).

Residues Thr305–Ala356 are disordered. Positions Thr318–Thr352 are enriched in pro residues. WH2 domains follow at residues Asp383 to Val400 and Ser410 to Val427. 2 disordered regions span residues Arg425–Asn452 and Met464–Ser526. The interval Val448–Asp484 is central and acidic domains. Residues Met464–Gly480 show a composition bias toward low complexity. 2 stretches are compositionally biased toward polar residues: residues Asn481–Lys491 and Thr506–Ser526.

In terms of assembly, homodimer.

The protein localises to the cell surface. Recruits and activates the Arp2/3 complex, which in turn leads to actin polymerization, promoting Rickettsia motility during infection. This Rickettsia felis (strain ATCC VR-1525 / URRWXCal2) (Rickettsia azadi) protein is Arp2/3 complex-activating protein rickA (rickA).